Reading from the N-terminus, the 58-residue chain is Alpha-conotoxin-like Pu1.6 (58 aa).

An N-terminal signal peptide occupies residues 1–17; it reads MFTVFLLVVLVTTVVFS. Residues 18–35 constitute a propeptide that is removed on maturation; that stretch reads TSDHRPASNHENRRASKR. Disulfide bonds link Cys44–Cys50 and Cys45–Cys58. Positions 46–48 are lacks the Ser-Xaa-Pro motif that is crucial for potent interaction with nAChR; the sequence is TNP.

This sequence belongs to the conotoxin A superfamily. Expressed by the venom duct.

It localises to the secreted. Its function is as follows. Alpha-conotoxins act on postsynaptic membranes, they bind to the nicotinic acetylcholine receptors (nAChR) and thus inhibit them. Has possibly a distinct nAChR binding mode from other alpha-conotoxins, due to a different three residue motif (lacks the Ser-Xaa-Pro motif). In Conus pulicarius (Flea-bitten cone), this protein is Alpha-conotoxin-like Pu1.6.